The primary structure comprises 443 residues: Threonine/serine transporter TdcC (443 aa).

11 consecutive transmembrane segments (helical) span residues Trp24–Ala44, Gly45–Phe65, Val95–Tyr115, Val140–Met160, Val163–Ile183, Ile207–Ile227, Ala259–Ser279, Ala319–Leu339, Leu363–Pro383, Ile385–Pro405, and Ser423–Met443.

It belongs to the amino acid/polyamine transporter 2 family. SdaC/TdcC subfamily.

It is found in the cell inner membrane. The catalysed reaction is L-threonine(in) + H(+)(in) = L-threonine(out) + H(+)(out). It carries out the reaction L-serine(in) + H(+)(in) = L-serine(out) + H(+)(out). Its function is as follows. Involved in the import of threonine and serine into the cell, with the concomitant import of a proton (symport system). The polypeptide is Threonine/serine transporter TdcC (Edwardsiella piscicida).